Reading from the N-terminus, the 87-residue chain is uncharacterized protein (87 aa).

This is an uncharacterized protein from Enterobacteria phage T4 (Bacteriophage T4).